The primary structure comprises 137 residues: MKPPLAVDTSVAIPLLVRTHTAHAAVVAWWAHREAALCGHALAETYSVLTRLPRDLRLAPMDAARLLTERFAAPLLLSSRTTEHLPRVLAQFEITGGAVYDALVALAAAEHRAELATRDARAKDTYEKIGVHVVVAA.

One can recognise a PINc domain in the interval 7-125 (VDTSVAIPLL…ATRDARAKDT (119 aa)). Asp-8 and Asp-101 together coordinate Mg(2+).

The protein belongs to the PINc/VapC protein family. As to quaternary structure, interacts with cognate antitoxin VapB27. It depends on Mg(2+) as a cofactor.

The protein localises to the secreted. In terms of biological role, probably the toxic component of a type II toxin-antitoxin (TA) system. An RNase. Its cognate antitoxin is VapB27. The polypeptide is Ribonuclease VapC27 (Mycobacterium tuberculosis (strain ATCC 25618 / H37Rv)).